Consider the following 601-residue polypeptide: Kelch repeat and BTB domain-containing protein 8 (601 aa).

One can recognise a BTB domain in the interval threonine 48 to glutamate 116. The BACK domain occupies cysteine 151–proline 253. Kelch repeat units lie at residues aspartate 336–glycine 390, lysine 391–aspartate 441, isoleucine 443–asparagine 481, cysteine 482–leucine 529, and glutamine 542–valine 588.

Belongs to the KBTBD8 family. Component of the BCR(KBTBD8) E3 ubiquitin ligase complex.

It localises to the cytoplasm. It is found in the cytoskeleton. Its subcellular location is the spindle. The protein localises to the golgi apparatus. In terms of biological role, substrate-specific adapter of a BCR (BTB-CUL3-RBX1) E3 ubiquitin ligase complex that acts as a regulator of neural crest specification. The BCR(KBTBD8) complex acts by mediating monoubiquitination of target proteins. The protein is Kelch repeat and BTB domain-containing protein 8 (kbtbd8) of Danio rerio (Zebrafish).